Here is a 105-residue protein sequence, read N- to C-terminus: UPF0235 protein A1C_06510 (105 aa).

This sequence belongs to the UPF0235 family.

The chain is UPF0235 protein A1C_06510 from Rickettsia akari (strain Hartford).